Here is a 282-residue protein sequence, read N- to C-terminus: Elongation factor Ts (282 aa).

Residues 80–83 (TDFV) are involved in Mg(2+) ion dislocation from EF-Tu.

The protein belongs to the EF-Ts family.

It is found in the cytoplasm. Associates with the EF-Tu.GDP complex and induces the exchange of GDP to GTP. It remains bound to the aminoacyl-tRNA.EF-Tu.GTP complex up to the GTP hydrolysis stage on the ribosome. This is Elongation factor Ts from Chlamydia trachomatis serovar L2b (strain UCH-1/proctitis).